A 29-amino-acid polypeptide reads, in one-letter code: Trypsin inhibitor 1 (29 aa).

3 disulfide bridges follow: Cys3–Cys20, Cys10–Cys22, and Cys16–Cys28.

The protein belongs to the protease inhibitor I7 (squash-type serine protease inhibitor) family.

Its subcellular location is the secreted. Its function is as follows. Inhibits trypsin. In Cucurbita maxima (Pumpkin), this protein is Trypsin inhibitor 1.